A 249-amino-acid polypeptide reads, in one-letter code: uncharacterized protein (249 aa).

The protein belongs to the AIM2 family.

Its subcellular location is the cytoplasm. The protein localises to the nucleus. This is an uncharacterized protein from Schizosaccharomyces pombe (strain 972 / ATCC 24843) (Fission yeast).